The sequence spans 347 residues: MAKGLLMTYTLWAVGGPAGLHHLYLGRDSHALLWMLTLGGGGLGWLWEFWMLPSFVAQANRAQEQRQGSGRGTPPLSLIRFVAQMIVGMYFGLVALISLSFMASFYIVGLPLAVGLGVLLVAAVGNQTSDLKNTLGAAFLTSPIFYGRPIAILPISLAASITAQKHRRYKPSVGSETLSVRLYRLGLAYLAFTGPLVHSVLCHTAVTLSYVADTLGSFLSWFSFFPLLGRLLESVLLLPFRAWKLLVGDHGISSSYFQEWEKLYEFVHSFQDEKRQLALQVFGLSEGATNEEIHGRYRELVKTWHPDHNRYQMEEAQRRFLEIQAAYEVLRQPRKPRGSWRWEETSF.

The 47-residue stretch at 4 to 50 folds into the TM2 domain; sequence GLLMTYTLWAVGGPAGLHHLYLGRDSHALLWMLTLGGGGLGWLWEFW. 7 helical membrane passes run 5–25, 32–52, 81–101, 105–125, 135–155, 186–206, and 218–238; these read LLMT…HLYL, LLWM…FWML, FVAQ…SLSF, FYIV…AAVG, LGAA…ILPI, GLAY…HTAV, and FLSW…VLLL. The region spanning 277 to 347 is the J domain; sequence LALQVFGLSE…GSWRWEETSF (71 aa).

The protein resides in the membrane. In terms of biological role, may function as a co-chaperone. This chain is DnaJ homolog subfamily C member 22 (DNAJC22), found in Bos taurus (Bovine).